Reading from the N-terminus, the 432-residue chain is Meiotically up-regulated gene 134 protein (432 aa).

The protein belongs to the UPF0300 family.

The protein resides in the cytoplasm. It localises to the cell cortex. Functionally, has a role in meiosis. This Schizosaccharomyces pombe (strain 972 / ATCC 24843) (Fission yeast) protein is Meiotically up-regulated gene 134 protein (mug134).